We begin with the raw amino-acid sequence, 155 residues long: MNKFTNLLIKRTASSLKGGDFRELFRKNYIPITQFEKVLLSVTSCVEGLKNPTDSNSVACITELTSNRALRKLQILMNSTPDGRRIIKNRPLIDSSKYSIKDLMAFPDDSLGRRYGEFLTTYNLEIDRAPVRYVNSEDLAYVLTRFRQVSLNDYK.

The protein belongs to the COQ4 family. Component of a multi-subunit COQ enzyme complex. Requires Zn(2+) as cofactor.

It localises to the mitochondrion inner membrane. The catalysed reaction is a 4-hydroxy-3-methoxy-5-(all-trans-polyprenyl)benzoate + H(+) = a 2-methoxy-6-(all-trans-polyprenyl)phenol + CO2. It participates in cofactor biosynthesis; ubiquinone biosynthesis. Its function is as follows. Lyase that catalyzes the C1-decarboxylation of 4-hydroxy-3-methoxy-5-(all-trans-polyprenyl)benzoic acid into 2-methoxy-6-(all-trans-polyprenyl)phenol during ubiquinone biosynthesis. This is Ubiquinone biosynthesis protein COQ4 homolog, mitochondrial from Cryptosporidium hominis.